The sequence spans 230 residues: Ribose-5-phosphate isomerase A (230 aa).

Substrate is bound by residues 28–31 (TGST), 83–86 (DGAD), and 97–100 (KGLG). The active-site Proton acceptor is the Glu-106. Position 124 (Lys-124) interacts with substrate.

Belongs to the ribose 5-phosphate isomerase family. As to quaternary structure, homodimer.

It catalyses the reaction aldehydo-D-ribose 5-phosphate = D-ribulose 5-phosphate. It functions in the pathway carbohydrate degradation; pentose phosphate pathway; D-ribose 5-phosphate from D-ribulose 5-phosphate (non-oxidative stage): step 1/1. Its function is as follows. Catalyzes the reversible conversion of ribose-5-phosphate to ribulose 5-phosphate. The sequence is that of Ribose-5-phosphate isomerase A from Gloeobacter violaceus (strain ATCC 29082 / PCC 7421).